A 191-amino-acid polypeptide reads, in one-letter code: Ribonuclease HII (191 aa).

The RNase H type-2 domain occupies 16-191 (INLIGIDEAG…KLHRKSFKLL (176 aa)). Positions 22, 23, and 110 each coordinate a divalent metal cation.

The protein belongs to the RNase HII family. Requires Mn(2+) as cofactor. Mg(2+) serves as cofactor.

Its subcellular location is the cytoplasm. It carries out the reaction Endonucleolytic cleavage to 5'-phosphomonoester.. Endonuclease that specifically degrades the RNA of RNA-DNA hybrids. This is Ribonuclease HII from Campylobacter jejuni subsp. doylei (strain ATCC BAA-1458 / RM4099 / 269.97).